Reading from the N-terminus, the 121-residue chain is Large ribosomal subunit protein bL12 (121 aa).

Belongs to the bacterial ribosomal protein bL12 family. As to quaternary structure, homodimer. Part of the ribosomal stalk of the 50S ribosomal subunit. Forms a multimeric L10(L12)X complex, where L10 forms an elongated spine to which 2 to 4 L12 dimers bind in a sequential fashion. Binds GTP-bound translation factors.

Forms part of the ribosomal stalk which helps the ribosome interact with GTP-bound translation factors. Is thus essential for accurate translation. The polypeptide is Large ribosomal subunit protein bL12 (Lactobacillus delbrueckii subsp. bulgaricus (strain ATCC BAA-365 / Lb-18)).